We begin with the raw amino-acid sequence, 98 residues long: NADH-ubiquinone oxidoreductase chain 4L (98 aa).

Helical transmembrane passes span 1–21, 29–49, and 61–81; these read MSMV…GLLV, SLLC…ITIL, and IILL…LVMV.

The protein belongs to the complex I subunit 4L family. In terms of assembly, core subunit of respiratory chain NADH dehydrogenase (Complex I) which is composed of 45 different subunits.

It is found in the mitochondrion inner membrane. The enzyme catalyses a ubiquinone + NADH + 5 H(+)(in) = a ubiquinol + NAD(+) + 4 H(+)(out). Core subunit of the mitochondrial membrane respiratory chain NADH dehydrogenase (Complex I) which catalyzes electron transfer from NADH through the respiratory chain, using ubiquinone as an electron acceptor. Part of the enzyme membrane arm which is embedded in the lipid bilayer and involved in proton translocation. The protein is NADH-ubiquinone oxidoreductase chain 4L (MT-ND4L) of Mephitis mephitis (Striped skunk).